Consider the following 287-residue polypeptide: Heavy metal-associated isoprenylated plant protein 4 (287 aa).

2 HMA domains span residues Ile14–Ile80 and Ile112–Glu176. 4 residues coordinate a metal cation: Cys25, Cys28, Cys123, and Cys126. Residues Ser179–Glu235 adopt a coiled-coil conformation. A disordered region spans residues Lys181–Val232. Cys284 is subject to Cysteine methyl ester. Residue Cys284 is the site of S-farnesyl cysteine attachment. Residues Arg285–Val287 constitute a propeptide, removed in mature form.

Belongs to the HIPP family.

In terms of biological role, heavy-metal-binding protein. The polypeptide is Heavy metal-associated isoprenylated plant protein 4 (Arabidopsis thaliana (Mouse-ear cress)).